The following is a 702-amino-acid chain: Elongation factor G (702 aa).

The region spanning 8–290 is the tr-type G domain; that stretch reads TRYRNIGISA…AVIEYLPAPT (283 aa). GTP-binding positions include 17–24, 88–92, and 142–145; these read AHIDAGKT, DTPGH, and NKMD.

This sequence belongs to the TRAFAC class translation factor GTPase superfamily. Classic translation factor GTPase family. EF-G/EF-2 subfamily.

It is found in the cytoplasm. Catalyzes the GTP-dependent ribosomal translocation step during translation elongation. During this step, the ribosome changes from the pre-translocational (PRE) to the post-translocational (POST) state as the newly formed A-site-bound peptidyl-tRNA and P-site-bound deacylated tRNA move to the P and E sites, respectively. Catalyzes the coordinated movement of the two tRNA molecules, the mRNA and conformational changes in the ribosome. In Erwinia tasmaniensis (strain DSM 17950 / CFBP 7177 / CIP 109463 / NCPPB 4357 / Et1/99), this protein is Elongation factor G.